We begin with the raw amino-acid sequence, 262 residues long: 3-methyl-2-oxobutanoate hydroxymethyltransferase (262 aa).

Mg(2+)-binding residues include Asp44 and Asp83. 3-methyl-2-oxobutanoate-binding positions include 44 to 45 (DS), Asp83, and Lys112. Position 114 (Glu114) interacts with Mg(2+). Glu177 (proton acceptor) is an active-site residue.

Belongs to the PanB family. As to quaternary structure, homodecamer; pentamer of dimers. Requires Mg(2+) as cofactor.

The protein localises to the cytoplasm. It catalyses the reaction 3-methyl-2-oxobutanoate + (6R)-5,10-methylene-5,6,7,8-tetrahydrofolate + H2O = 2-dehydropantoate + (6S)-5,6,7,8-tetrahydrofolate. It participates in cofactor biosynthesis; coenzyme A biosynthesis. Functionally, catalyzes the reversible reaction in which hydroxymethyl group from 5,10-methylenetetrahydrofolate is transferred onto alpha-ketoisovalerate to form ketopantoate. This is 3-methyl-2-oxobutanoate hydroxymethyltransferase from Metallosphaera sedula (strain ATCC 51363 / DSM 5348 / JCM 9185 / NBRC 15509 / TH2).